The following is a 213-amino-acid chain: Superoxide dismutase [Fe] (213 aa).

Fe cation is bound by residues His-28, His-82, Asp-164, and His-168.

Belongs to the iron/manganese superoxide dismutase family. In terms of assembly, homotetramer. It depends on Fe cation as a cofactor.

It catalyses the reaction 2 superoxide + 2 H(+) = H2O2 + O2. Destroys superoxide anion radicals which are normally produced within the cells and which are toxic to biological systems. The protein is Superoxide dismutase [Fe] (sodB) of Aquifex aeolicus (strain VF5).